The primary structure comprises 395 residues: Phosphopentomutase (395 aa).

Mn(2+) contacts are provided by Asp-10, Asp-294, His-299, Asp-335, His-336, and His-347.

The protein belongs to the phosphopentomutase family. It depends on Mn(2+) as a cofactor.

It localises to the cytoplasm. It carries out the reaction 2-deoxy-alpha-D-ribose 1-phosphate = 2-deoxy-D-ribose 5-phosphate. It catalyses the reaction alpha-D-ribose 1-phosphate = D-ribose 5-phosphate. It participates in carbohydrate degradation; 2-deoxy-D-ribose 1-phosphate degradation; D-glyceraldehyde 3-phosphate and acetaldehyde from 2-deoxy-alpha-D-ribose 1-phosphate: step 1/2. Its function is as follows. Isomerase that catalyzes the conversion of deoxy-ribose 1-phosphate (dRib-1-P) and ribose 1-phosphate (Rib-1-P) to deoxy-ribose 5-phosphate (dRib-5-P) and ribose 5-phosphate (Rib-5-P), respectively. This chain is Phosphopentomutase, found in Actinobacillus succinogenes (strain ATCC 55618 / DSM 22257 / CCUG 43843 / 130Z).